The sequence spans 299 residues: Acetaldehyde dehydrogenase (299 aa).

11 to 14 (SGNI) is an NAD(+) binding site. The active-site Acyl-thioester intermediate is the Cys126. Residues 157 to 165 (SAGPGTRAN) and Asn267 contribute to the NAD(+) site.

The protein belongs to the acetaldehyde dehydrogenase family.

It catalyses the reaction acetaldehyde + NAD(+) + CoA = acetyl-CoA + NADH + H(+). In Bacillus cereus (strain ATCC 10987 / NRS 248), this protein is Acetaldehyde dehydrogenase.